A 643-amino-acid polypeptide reads, in one-letter code: Versicolorin B synthase (643 aa).

A propeptide spanning residues 1–41 is cleaved from the precursor; the sequence is MGRNWFQVTAMAVVPVVGIMAAVNPTILSSAASSLPSLGAM. FAD is bound by residues 84 to 85 and 105 to 106; these read TA and EA. Residue asparagine 116 is glycosylated (N-linked (GlcNAc...) asparagine). 171–174 is a binding site for FAD; that stretch reads GAML. 2 N-linked (GlcNAc...) asparagine glycosylation sites follow: asparagine 221 and asparagine 507. Residues alanine 613 and 624 to 625 each bind FAD; that span reads PM.

It belongs to the GMC oxidoreductase family. As to quaternary structure, homodimer. Requires FAD as cofactor. Post-translationally, N-glycosylated.

The protein resides in the cytoplasm. Its subcellular location is the cytosol. It catalyses the reaction (2S-3S)-versiconal hemiacetal = versicolorin B + H2O. It carries out the reaction (S)-5'-oxoaverantin + H(+) = (1'S,5'S)-averufin + H2O. Its pathway is mycotoxin biosynthesis; aflatoxin biosynthesis. In terms of biological role, dual cyclase; part of the gene cluster that mediates the biosynthesis of aflatoxins, a group of polyketide-derived furanocoumarins, and part of the most toxic and carcinogenic compounds among the known mycotoxins. The four major aflatoxins produced by A.parasiticus are aflatoxin B1 (AFB1), aflatoxin B2 (AFB2), aflatoxin G1 (AFG1) and aflatoxin G2 (AFG2). Aflk plays a dual role within the aflatoxin pathway, as a 5'-oxoaverantin cyclase that mediates conversion of 5'-oxoaverantin (OAVN) to averufin (AVF), as well as a versicolorin B synthase that converts versiconal (VAL) to versicolorin B (VERB) by closing the bisfuran ring of aflatoxin which is required for DNA-binding, thus giving to aflatoxin its activity as a mutagen. The biosynthesis of aflatoxins begins with the norsolorinic acid synthase aflC that combines a hexanoyl starter unit produced by the fatty acid synthase aflA/aflB and 7 malonyl-CoA extender units to synthesize the precursor NOR. The second step is the conversion of NOR to averantin and requires the norsolorinic acid ketoreductase aflD, which catalyzes the dehydration of norsolorinic acid to form (1'S)-averantin. The norsolorinic acid reductases aflE and aflF may also play a role in the conversion of NOR to AVN. The cytochrome P450 monooxygenase aflG then catalyzes the hydroxylation of AVN to 5'hydroxyaverantin (HAVN). The next step is performed by the 5'-hydroxyaverantin dehydrogenase aflH that transforms HAVN to 5'-oxoaverantin (OAVN) which is further converted to averufin (AVF) by aflK that plays a dual role in the pathway, as a 5'-oxoaverantin cyclase that mediates conversion of 5'-oxoaverantin, as well as a versicolorin B synthase in a later step in the pathway. The averufin oxidase aflI catalyzes the conversion of AVF to versiconal hemiacetal acetate (VHA). VHA is then the substrate for the versiconal hemiacetal acetate esterase aflJ to yield versiconal (VAL). Versicolorin B synthase aflK then converts VAL to versicolorin B (VERB) by closing the bisfuran ring of aflatoxin which is required for DNA-binding, thus giving to aflatoxin its activity as a mutagen. Then, the activity of the versicolorin B desaturase aflL leads to versicolorin A (VERA). A branch point starts from VERB since it can also be converted to dihydrodemethylsterigmatocystin (DMDHST), probably also by aflL, VERA being a precursor for aflatoxins B1 and G1, and DMDHST for aflatoxins B2 and G2. Next, the versicolorin reductase aflM and the cytochrome P450 monooxygenase aflN are involved in conversion of VERA to demethylsterigmatocystin (DMST). AflX and aflY seem also involved in this step, through probable aflX-mediated epoxide ring-opening step following versicolorin A oxidation and aflY-mediated Baeyer-Villiger oxidation required for the formation of the xanthone ring. The methyltransferase aflO then leads to the modification of DMST to sterigmatocystin (ST), and of DMDHST to dihydrosterigmatocystin (DHST). Both ST and DHST are then substrates of the O-methyltransferase aflP to yield O-methylsterigmatocystin (OMST) and dihydro-O-methylsterigmatocystin (DHOMST), respectively. Finally OMST is converted to aflatoxins B1 and G1, and DHOMST to aflatoxins B2 and G2, via the action of several enzymes including O-methylsterigmatocystin oxidoreductase aflQ, the cytochrome P450 monooxygenase aflU, but also the NADH-dependent flavin oxidoreductase nadA which is specifically required for the synthesis of AFG1. The polypeptide is Versicolorin B synthase (Aspergillus parasiticus (strain ATCC 56775 / NRRL 5862 / SRRC 143 / SU-1)).